Consider the following 187-residue polypeptide: MASTSDFKNGLVLQIEGQLWTIIEFQHVKPGKGPAFVRTKLKNVLSGKVVDKTFNAGVKVETATVDRRDMTYLYHDGTDYIFMDGDTYDQISISEATVGDGARFMLENMAVQVATHEDVPLFVELPVTVELVVQHTDPGLQGDRSTGGTKPATLETGAEINVPLFINTGDKLKVDSRDGNYLGRVNS.

Belongs to the elongation factor P family.

It is found in the cytoplasm. It functions in the pathway protein biosynthesis; polypeptide chain elongation. Its function is as follows. Involved in peptide bond synthesis. Stimulates efficient translation and peptide-bond synthesis on native or reconstituted 70S ribosomes in vitro. Probably functions indirectly by altering the affinity of the ribosome for aminoacyl-tRNA, thus increasing their reactivity as acceptors for peptidyl transferase. This is Elongation factor P from Rhodococcus jostii (strain RHA1).